The sequence spans 285 residues: Bifunctional protein FolD (285 aa).

Residues 166-168 (GAS) and I232 contribute to the NADP(+) site.

The protein belongs to the tetrahydrofolate dehydrogenase/cyclohydrolase family. In terms of assembly, homodimer.

The enzyme catalyses (6R)-5,10-methylene-5,6,7,8-tetrahydrofolate + NADP(+) = (6R)-5,10-methenyltetrahydrofolate + NADPH. The catalysed reaction is (6R)-5,10-methenyltetrahydrofolate + H2O = (6R)-10-formyltetrahydrofolate + H(+). It participates in one-carbon metabolism; tetrahydrofolate interconversion. Catalyzes the oxidation of 5,10-methylenetetrahydrofolate to 5,10-methenyltetrahydrofolate and then the hydrolysis of 5,10-methenyltetrahydrofolate to 10-formyltetrahydrofolate. The polypeptide is Bifunctional protein FolD (Buchnera aphidicola subsp. Schizaphis graminum (strain Sg)).